A 108-amino-acid chain; its full sequence is T-cell acute lymphocytic leukemia protein 2 homolog (108 aa).

The region spanning 2 to 54 is the bHLH domain; sequence TRKIFTNTRERWRQQSVNNAFAKLRKLIPTHPPDKKLSKNETLRLAMRYINFL. Positions 76 to 108 are disordered; sequence GLFPPKTRLPDEDDRTLLNDYRVPSPGPSHGAP.

The protein is T-cell acute lymphocytic leukemia protein 2 homolog (Tal2) of Mus musculus (Mouse).